We begin with the raw amino-acid sequence, 303 residues long: DCN1-like protein 3 (303 aa).

Disordered stretches follow at residues 1 to 41 and 62 to 83; these read MGQC…HLSI and EASQ…TGAE. Gly-2 is lipidated: N-myristoyl glycine. The DCUN1 domain occupies 85 to 277; that stretch reads SSVQRIEELF…LFDTFVEWEM (193 aa). Positions 284–303 are disordered; the sequence is EETKCIPCSGTDDQSTEGQT. Residues 294–303 show a composition bias toward polar residues; it reads TDDQSTEGQT.

May interact (via the DCUN1 domain) with unneddylated cullins.

The protein localises to the cell membrane. It is found in the cytoplasm. Its subcellular location is the nucleus. It localises to the perinuclear region. Contributes to the neddylation of all cullins by transferring NEDD8 from N-terminally acetylated NEDD8-conjugating E2s enzyme to different cullin C-terminal domain-RBX complexes. At the cell membrane, can promote and as well inhibit cullins neddylation. This chain is DCN1-like protein 3, found in Xenopus tropicalis (Western clawed frog).